A 256-amino-acid polypeptide reads, in one-letter code: Enolase-phosphatase E1 (256 aa).

Residues Asp14 and Glu16 each coordinate Mg(2+). Substrate-binding positions include 142 to 143 (SS) and Lys176. Asp201 contributes to the Mg(2+) binding site.

The protein belongs to the HAD-like hydrolase superfamily. MasA/MtnC family. In terms of assembly, monomer. Requires Mg(2+) as cofactor.

The protein localises to the cytoplasm. Its subcellular location is the nucleus. The enzyme catalyses 5-methylsulfanyl-2,3-dioxopentyl phosphate + H2O = 1,2-dihydroxy-5-(methylsulfanyl)pent-1-en-3-one + phosphate. Its pathway is amino-acid biosynthesis; L-methionine biosynthesis via salvage pathway; L-methionine from S-methyl-5-thio-alpha-D-ribose 1-phosphate: step 3/6. It participates in amino-acid biosynthesis; L-methionine biosynthesis via salvage pathway; L-methionine from S-methyl-5-thio-alpha-D-ribose 1-phosphate: step 4/6. Functionally, bifunctional enzyme that catalyzes the enolization of 2,3-diketo-5-methylthiopentyl-1-phosphate (DK-MTP-1-P) into the intermediate 2-hydroxy-3-keto-5-methylthiopentenyl-1-phosphate (HK-MTPenyl-1-P), which is then dephosphorylated to form the acireductone 1,2-dihydroxy-3-keto-5-methylthiopentene (DHK-MTPene). This is Enolase-phosphatase E1 from Drosophila yakuba (Fruit fly).